A 151-amino-acid polypeptide reads, in one-letter code: MKLILTTEVEHLGTAGDAVEVKDGYGRNYLLPRGLAIVATRGAERQANDIRRAREAKEIRGVEHANEIKQAIEGLGAVKLTVKTAGEGKLFGSVTAADVVGAIKAAGGPNLDKRTVTLPKAHIKQIGSYVLDVHLHAGVATKVTVDVVAEG.

The protein belongs to the bacterial ribosomal protein bL9 family.

Functionally, binds to the 23S rRNA. The chain is Large ribosomal subunit protein bL9 from Mycobacteroides abscessus (strain ATCC 19977 / DSM 44196 / CCUG 20993 / CIP 104536 / JCM 13569 / NCTC 13031 / TMC 1543 / L948) (Mycobacterium abscessus).